The chain runs to 580 residues: Alpha-glucosidase (580 aa).

The first 19 residues, 1–19, serve as a signal peptide directing secretion; that stretch reads MRPLGALSLFALLATTVSG. N-linked (GlcNAc...) asparagine glycosylation is found at asparagine 102 and asparagine 127. Aspartate 224 acts as the Nucleophile in catalysis. Catalysis depends on glutamate 290, which acts as the Proton donor. Asparagine 501 carries N-linked (GlcNAc...) asparagine glycosylation. The helical transmembrane segment at 560-580 threads the bilayer; that stretch reads AAAINLSIGLLLAIMARYIFV.

Belongs to the glycosyl hydrolase 13 family. (Microbial infection) Binds to L.sphaericus BinB subunit of the binary toxin BinAB. In terms of tissue distribution, in 4th-instar larvae produced in the brush border membranes of the gastric caeca and the posterior stomach cells (at protein level).

The protein resides in the membrane. It carries out the reaction Hydrolysis of terminal, non-reducing (1-&gt;4)-linked alpha-D-glucose residues with release of alpha-D-glucose.. Its function is as follows. Probably an alpha-glucosidase, it has no alpha-amylase function. In terms of biological role, (Microbial infection) Serves as the larval receptor for Lysinibacillus sphaericus BinB toxin. The sequence is that of Alpha-glucosidase from Culex pipiens (House mosquito).